A 510-amino-acid polypeptide reads, in one-letter code: Glycerol kinase (510 aa).

Residue Thr-13 participates in ADP binding. ATP-binding residues include Thr-13 and Thr-14. Thr-13 provides a ligand contact to sn-glycerol 3-phosphate. Arg-17 contributes to the ADP binding site. Sn-glycerol 3-phosphate-binding residues include Arg-83, Glu-84, Tyr-135, and Asp-255. Arg-83, Glu-84, Tyr-135, Asp-255, and Gln-256 together coordinate glycerol. ADP is bound by residues Thr-277, Gly-321, Gly-421, and Asn-425. The ATP site is built by Thr-277, Gly-321, and Gly-421.

It belongs to the FGGY kinase family.

The enzyme catalyses glycerol + ATP = sn-glycerol 3-phosphate + ADP + H(+). The protein operates within polyol metabolism; glycerol degradation via glycerol kinase pathway; sn-glycerol 3-phosphate from glycerol: step 1/1. Key enzyme in the regulation of glycerol uptake and metabolism. Catalyzes the phosphorylation of glycerol to yield sn-glycerol 3-phosphate. This chain is Glycerol kinase, found in Halobacterium salinarum (strain ATCC 29341 / DSM 671 / R1).